The chain runs to 91 residues: Lipolysis-activating peptide 1-alpha chain (91 aa).

A signal peptide spans 1-21 (MNIKLFCFLSILISLTGLSLS). Residues 23–87 (DDGNYPIDAN…FFDAYKTYCK (65 aa)) form the LCN-type CS-alpha/beta domain. Intrachain disulfides connect Cys38-Cys61, Cys47-Cys66, and Cys51-Cys68.

It belongs to the long (3 C-C) scorpion toxin superfamily. As to quaternary structure, heterodimer of this alpha chain and a beta chain (AC D9U2A2). In terms of tissue distribution, expressed by the venom gland.

Its subcellular location is the secreted. The heterodimer LVP1 induces lipolysis in rat adipocytes. Induction of lipolysis by LVP1 appears to be mediated through the beta-2 adrenergic receptor pathway (ADRB2). The polypeptide is Lipolysis-activating peptide 1-alpha chain (Lychas mucronatus (Chinese swimming scorpion)).